Consider the following 480-residue polypeptide: Proline--tRNA ligase (480 aa).

It belongs to the class-II aminoacyl-tRNA synthetase family. ProS type 3 subfamily. In terms of assembly, homodimer.

The protein resides in the cytoplasm. The catalysed reaction is tRNA(Pro) + L-proline + ATP = L-prolyl-tRNA(Pro) + AMP + diphosphate. Catalyzes the attachment of proline to tRNA(Pro) in a two-step reaction: proline is first activated by ATP to form Pro-AMP and then transferred to the acceptor end of tRNA(Pro). The sequence is that of Proline--tRNA ligase from Roseiflexus sp. (strain RS-1).